Consider the following 79-residue polypeptide: Putative defensin-like protein 146 (79 aa).

Residues Met1–Gly25 form the signal peptide. 4 cysteine pairs are disulfide-bonded: Cys35-Cys78, Cys46-Cys66, Cys51-Cys72, and Cys55-Cys74.

Belongs to the DEFL family.

It localises to the secreted. The chain is Putative defensin-like protein 146 (LCR9) from Arabidopsis thaliana (Mouse-ear cress).